Reading from the N-terminus, the 322-residue chain is Phosphatidylserine decarboxylase proenzyme (322 aa).

Catalysis depends on charge relay system; for autoendoproteolytic cleavage activity residues Asp-90, His-147, and Ser-254. Ser-254 serves as the catalytic Schiff-base intermediate with substrate; via pyruvic acid; for decarboxylase activity. Pyruvic acid (Ser); by autocatalysis is present on Ser-254. A disordered region spans residues 293–322 (PDAEPAPLPAEEIEAEHDASPLVDDKKDQV). Residues 308–322 (EHDASPLVDDKKDQV) show a composition bias toward basic and acidic residues.

The protein belongs to the phosphatidylserine decarboxylase family. PSD-B subfamily. Prokaryotic type I sub-subfamily. Heterodimer of a large membrane-associated beta subunit and a small pyruvoyl-containing alpha subunit. The cofactor is pyruvate. Is synthesized initially as an inactive proenzyme. Formation of the active enzyme involves a self-maturation process in which the active site pyruvoyl group is generated from an internal serine residue via an autocatalytic post-translational modification. Two non-identical subunits are generated from the proenzyme in this reaction, and the pyruvate is formed at the N-terminus of the alpha chain, which is derived from the carboxyl end of the proenzyme. The autoendoproteolytic cleavage occurs by a canonical serine protease mechanism, in which the side chain hydroxyl group of the serine supplies its oxygen atom to form the C-terminus of the beta chain, while the remainder of the serine residue undergoes an oxidative deamination to produce ammonia and the pyruvoyl prosthetic group on the alpha chain. During this reaction, the Ser that is part of the protease active site of the proenzyme becomes the pyruvoyl prosthetic group, which constitutes an essential element of the active site of the mature decarboxylase.

The protein localises to the cell membrane. It catalyses the reaction a 1,2-diacyl-sn-glycero-3-phospho-L-serine + H(+) = a 1,2-diacyl-sn-glycero-3-phosphoethanolamine + CO2. Its pathway is phospholipid metabolism; phosphatidylethanolamine biosynthesis; phosphatidylethanolamine from CDP-diacylglycerol: step 2/2. Functionally, catalyzes the formation of phosphatidylethanolamine (PtdEtn) from phosphatidylserine (PtdSer). This Escherichia coli O45:K1 (strain S88 / ExPEC) protein is Phosphatidylserine decarboxylase proenzyme.